The chain runs to 70 residues: uncharacterized protein (70 aa).

The signal sequence occupies residues 1-16; it reads MKLLLVLITLIIAALA.

This is an uncharacterized protein from Orgyia pseudotsugata (Douglas-fir tussock moth).